The primary structure comprises 547 residues: RING finger protein ETP1 homolog (547 aa).

The segment at 208–248 (CVVCLERMDSSITGLITIVCQHTFHCPCLQKWGNSSCPVCR) adopts an RING-type zinc-finger fold. The segment at 245-338 (PVCRYTQKVQ…GKLVELSTDG (94 aa)) adopts a UBP-type; degenerate zinc-finger fold. 8 residues coordinate Zn(2+): C262, C265, C274, C277, C282, H289, H293, and H299. The segment covering 514 to 523 (LPNNSTVRSN) has biased composition (polar residues). The disordered stretch occupies residues 514-547 (LPNNSTVRSNSVKSKKKKKKKPVVPSSSGSLGTD). Residues 526-535 (KSKKKKKKKP) show a composition bias toward basic residues.

The protein localises to the cytoplasm. Functionally, may act as a cytoplasmic retention protein with a role in regulating nuclear transport. This Schizosaccharomyces pombe (strain 972 / ATCC 24843) (Fission yeast) protein is RING finger protein ETP1 homolog.